Reading from the N-terminus, the 82-residue chain is Large ribosomal subunit protein bL31B (82 aa).

Belongs to the bacterial ribosomal protein bL31 family. Type B subfamily. In terms of assembly, part of the 50S ribosomal subunit.

This is Large ribosomal subunit protein bL31B from Pectobacterium atrosepticum (strain SCRI 1043 / ATCC BAA-672) (Erwinia carotovora subsp. atroseptica).